The sequence spans 210 residues: Proteasome subunit beta 2 (210 aa).

Positions 1-12 (MSNNVEEKILHG) are cleaved as a propeptide — removed in mature form; by autocatalysis. T13 (nucleophile) is an active-site residue.

This sequence belongs to the peptidase T1B family. In terms of assembly, the 20S proteasome core is composed of 14 alpha and 14 beta subunits that assemble into four stacked heptameric rings, resulting in a barrel-shaped structure. The two inner rings, each composed of seven catalytic beta subunits, are sandwiched by two outer rings, each composed of seven alpha subunits. The catalytic chamber with the active sites is on the inside of the barrel. Has a gated structure, the ends of the cylinder being occluded by the N-termini of the alpha-subunits. Is capped at one or both ends by the proteasome regulatory ATPase, PAN.

The protein localises to the cytoplasm. It catalyses the reaction Cleavage of peptide bonds with very broad specificity.. Its activity is regulated as follows. The formation of the proteasomal ATPase PAN-20S proteasome complex, via the docking of the C-termini of PAN into the intersubunit pockets in the alpha-rings, triggers opening of the gate for substrate entry. Interconversion between the open-gate and close-gate conformations leads to a dynamic regulation of the 20S proteasome proteolysis activity. Its function is as follows. Component of the proteasome core, a large protease complex with broad specificity involved in protein degradation. The chain is Proteasome subunit beta 2 from Nitrosopumilus maritimus (strain SCM1).